The primary structure comprises 212 residues: HTH-type transcriptional regulatory protein RaaS (212 aa).

The HTH tetR-type domain maps to 6-65; it reads LTAHARIREAAIEQFGRHGFGVGLRAIAEAAGVSAALVIHHFGSKEGLRKACDDFVAEEI. A DNA-binding region (H-T-H motif) is located at residues 28 to 47; sequence GLRAIAEAAGVSAALVIHHF.

Homodimer. Interacts with long chain acyl-CoA derivatives. Interacts with several drugs such rhodamine 6G, ethidium and safranin O.

Its activity is regulated as follows. Interaction with long chain acyl-CoA derivatives (oleoyl-CoA and, to lesser extent, stearoyl-CoA) prevents binding to DNA, leading to the expression of the target genes. Long chain acyl-CoA derivatives may serve as biological indicators of the bacterial metabolic state. Functionally, regulates the expression of the Rv1217c-Rv1218c multidrug efflux system and its own expression. Acts by binding to promoter regions of Rv1219c and upstream of the Rv1218c gene. Important for survival in prolonged stationary phase and during macrophage infection. May be used to eliminate non-growing mycobacteria. The polypeptide is HTH-type transcriptional regulatory protein RaaS (Mycobacterium tuberculosis (strain ATCC 25618 / H37Rv)).